The chain runs to 292 residues: 2-(5''-triphosphoribosyl)-3'-dephosphocoenzyme-A synthase (292 aa).

This sequence belongs to the CitG/MdcB family.

The enzyme catalyses 3'-dephospho-CoA + ATP = 2'-(5''-triphospho-alpha-D-ribosyl)-3'-dephospho-CoA + adenine. Catalyzes the formation of 2-(5''-triphosphoribosyl)-3'-dephosphocoenzyme-A, the precursor of the prosthetic group of the holo-acyl carrier protein (gamma chain) of citrate lyase, from ATP and dephospho-CoA. This is 2-(5''-triphosphoribosyl)-3'-dephosphocoenzyme-A synthase from Escherichia coli O6:K15:H31 (strain 536 / UPEC).